Here is a 143-residue protein sequence, read N- to C-terminus: Nitrosuccinic acid decarboxylase npaB (143 aa).

Belongs to the carboxymuconolactone decarboxylase family. Requires Mg(2+) as cofactor.

It functions in the pathway mycotoxin biosynthesis. In terms of biological role, nitrosuccinic acid decarboxylase; part of the gene cluster that mediates the biosynthesis of the deadly neurotoxic nitroalkane 3-nitropropanoic acid (3-NPA) that acts as an antimetabolite of succinate and irreversibly inhibits succinate dehydrogenase and disrupts mitochondrial oxidative phosphorylation. NpaB facilitates decarboxylation of nitrosuccinic acid produced by the nitrosuccinic acid synthase npaA to yield the final product of the cluster, the lethal mycotoxin 3-NPA. In Metarhizium robertsii (strain ARSEF 23 / ATCC MYA-3075) (Metarhizium anisopliae (strain ARSEF 23)), this protein is Nitrosuccinic acid decarboxylase npaB.